Consider the following 258-residue polypeptide: Imidazole glycerol phosphate synthase subunit HisF (258 aa).

Residues Asp11 and Asp130 contribute to the active site.

The protein belongs to the HisA/HisF family. Heterodimer of HisH and HisF.

The protein resides in the cytoplasm. It carries out the reaction 5-[(5-phospho-1-deoxy-D-ribulos-1-ylimino)methylamino]-1-(5-phospho-beta-D-ribosyl)imidazole-4-carboxamide + L-glutamine = D-erythro-1-(imidazol-4-yl)glycerol 3-phosphate + 5-amino-1-(5-phospho-beta-D-ribosyl)imidazole-4-carboxamide + L-glutamate + H(+). Its pathway is amino-acid biosynthesis; L-histidine biosynthesis; L-histidine from 5-phospho-alpha-D-ribose 1-diphosphate: step 5/9. Functionally, IGPS catalyzes the conversion of PRFAR and glutamine to IGP, AICAR and glutamate. The HisF subunit catalyzes the cyclization activity that produces IGP and AICAR from PRFAR using the ammonia provided by the HisH subunit. The chain is Imidazole glycerol phosphate synthase subunit HisF from Escherichia coli O127:H6 (strain E2348/69 / EPEC).